The primary structure comprises 483 residues: Probable apyrase 3 (483 aa).

Over 1–29 (MTPETDALKVQILPKHQSLPYTVTKAKSK) the chain is Cytoplasmic. The chain crosses the membrane as a helical; Signal-anchor for type II membrane protein span at residues 30–50 (SLILLVVVSVTITLGLLLYVF). The Extracellular portion of the chain corresponds to 51 to 483 (NSNSVISSGS…NGKSRKYLGF (433 aa)). Residue 72–82 (VLIDAGSSGTR) participates in ATP binding. Catalysis depends on E195, which acts as the Proton acceptor. Residue 219–229 (GIVELGGASAQ) participates in ATP binding. 4 N-linked (GlcNAc...) asparagine glycosylation sites follow: N250, N281, N305, and N326.

The protein belongs to the GDA1/CD39 NTPase family. It depends on Ca(2+) as a cofactor. In terms of tissue distribution, expressed in the initiation zone of lateral root and in the lateral root tip, the adaxial junction of lateral shoots with the stems, and in the abscission zone of flower organs. Not expressed in the rosette leaves.

The protein localises to the membrane. It carries out the reaction a ribonucleoside 5'-triphosphate + 2 H2O = a ribonucleoside 5'-phosphate + 2 phosphate + 2 H(+). Functionally, catalyzes the hydrolysis of phosphoanhydride bonds of nucleoside tri- and di-phosphates. This chain is Probable apyrase 3 (APY3), found in Arabidopsis thaliana (Mouse-ear cress).